The primary structure comprises 315 residues: Small ribosomal subunit protein uS2 (315 aa).

Residues 250–315 are disordered; sequence LLEQGDAAKA…TESEKAPVSE (66 aa). Basic and acidic residues-rich tracts occupy residues 272-282 and 297-315; these read VSAKNEAKSED and TEAK…PVSE.

The protein belongs to the universal ribosomal protein uS2 family.

The sequence is that of Small ribosomal subunit protein uS2 from Clavibacter michiganensis subsp. michiganensis (strain NCPPB 382).